The following is an 819-amino-acid chain: Leucine--tRNA ligase (819 aa).

The 'HIGH' region signature appears at 42–52 (PYPSGRLHMGH). The short motif at 577–581 (KMSKS) is the 'KMSKS' region element. Lys580 serves as a coordination point for ATP.

Belongs to the class-I aminoacyl-tRNA synthetase family.

The protein resides in the cytoplasm. It carries out the reaction tRNA(Leu) + L-leucine + ATP = L-leucyl-tRNA(Leu) + AMP + diphosphate. The protein is Leucine--tRNA ligase of Saccharophagus degradans (strain 2-40 / ATCC 43961 / DSM 17024).